We begin with the raw amino-acid sequence, 199 residues long: ATP-dependent Clp protease proteolytic subunit 2 (199 aa).

Ser-98 functions as the Nucleophile in the catalytic mechanism. His-123 is an active-site residue.

It belongs to the peptidase S14 family. In terms of assembly, fourteen ClpP subunits assemble into 2 heptameric rings which stack back to back to give a disk-like structure with a central cavity, resembling the structure of eukaryotic proteasomes.

It is found in the cytoplasm. It carries out the reaction Hydrolysis of proteins to small peptides in the presence of ATP and magnesium. alpha-casein is the usual test substrate. In the absence of ATP, only oligopeptides shorter than five residues are hydrolyzed (such as succinyl-Leu-Tyr-|-NHMec, and Leu-Tyr-Leu-|-Tyr-Trp, in which cleavage of the -Tyr-|-Leu- and -Tyr-|-Trp bonds also occurs).. Its function is as follows. Cleaves peptides in various proteins in a process that requires ATP hydrolysis. Has a chymotrypsin-like activity. Plays a major role in the degradation of misfolded proteins. This chain is ATP-dependent Clp protease proteolytic subunit 2, found in Treponema pallidum (strain Nichols).